Here is a 788-residue protein sequence, read N- to C-terminus: Multifunctional tryptophan biosynthesis protein (788 aa).

Residues 12–207 (DILMIDNFDS…MKLKGGTWEE (196 aa)) form the Glutamine amidotransferase type-1 domain. 63–65 (GPG) contacts L-glutamine. C91 (nucleophile; for GATase activity) is an active-site residue. 141 to 142 (SL) serves as a coordination point for L-glutamine. Residues H181 and E183 each act as for GATase activity in the active site. Positions 238–503 (ILEKICAQRQ…DTRAFIRQLL (266 aa)) are indole-3-glycerol phosphate synthase. Residues 520–788 (LSRSCGIRTE…RAFVKAAKKL (269 aa)) are N-(5'-phosphoribosyl)anthranilate isomerase.

The enzyme catalyses N-(5-phospho-beta-D-ribosyl)anthranilate = 1-(2-carboxyphenylamino)-1-deoxy-D-ribulose 5-phosphate. It catalyses the reaction 1-(2-carboxyphenylamino)-1-deoxy-D-ribulose 5-phosphate + H(+) = (1S,2R)-1-C-(indol-3-yl)glycerol 3-phosphate + CO2 + H2O. The catalysed reaction is chorismate + L-glutamine = anthranilate + pyruvate + L-glutamate + H(+). Its pathway is amino-acid biosynthesis; L-tryptophan biosynthesis; L-tryptophan from chorismate: step 1/5. It functions in the pathway amino-acid biosynthesis; L-tryptophan biosynthesis; L-tryptophan from chorismate: step 3/5. It participates in amino-acid biosynthesis; L-tryptophan biosynthesis; L-tryptophan from chorismate: step 4/5. In terms of biological role, trifunctional enzyme bearing the Gln amidotransferase (GATase) domain of anthranilate synthase, indole-glycerolphosphate synthase, and phosphoribosylanthranilate isomerase activities. The polypeptide is Multifunctional tryptophan biosynthesis protein (TRPC) (Phanerodontia chrysosporium (White-rot fungus)).